The chain runs to 147 residues: MRTYSPKPGDADRQWHIIDATDVVLGRLASHTATLLRGKHKPTFAPHMDMGDYVIIVNAEKVALTGAKLEKKRAYRHSGYPGGLKSQSYAELLETNPVRAVEKAVKGMLPKNSLAAQQLSKLKVYKGAEHPHTAQQPQTFEIGQVAQ.

This sequence belongs to the universal ribosomal protein uL13 family. In terms of assembly, part of the 50S ribosomal subunit.

This protein is one of the early assembly proteins of the 50S ribosomal subunit, although it is not seen to bind rRNA by itself. It is important during the early stages of 50S assembly. This Micrococcus luteus (strain ATCC 4698 / DSM 20030 / JCM 1464 / CCM 169 / CCUG 5858 / IAM 1056 / NBRC 3333 / NCIMB 9278 / NCTC 2665 / VKM Ac-2230) (Micrococcus lysodeikticus) protein is Large ribosomal subunit protein uL13.